Reading from the N-terminus, the 186-residue chain is Peptide deformylase (186 aa).

Fe cation is bound by residues Cys-99 and His-141. Residue Glu-142 is part of the active site. A Fe cation-binding site is contributed by His-145.

Belongs to the polypeptide deformylase family. Fe(2+) is required as a cofactor.

The catalysed reaction is N-terminal N-formyl-L-methionyl-[peptide] + H2O = N-terminal L-methionyl-[peptide] + formate. In terms of biological role, removes the formyl group from the N-terminal Met of newly synthesized proteins. Requires at least a dipeptide for an efficient rate of reaction. N-terminal L-methionine is a prerequisite for activity but the enzyme has broad specificity at other positions. This chain is Peptide deformylase, found in Chlamydia felis (strain Fe/C-56) (Chlamydophila felis).